A 189-amino-acid chain; its full sequence is Parkinson disease protein 7 homolog (189 aa).

A2 is subject to N-acetylalanine. Residues C46 and C53 are each lipidated (S-palmitoyl cysteine). Y67 is subject to Phosphotyrosine. The Nucleophile role is filled by C106. C106 carries the post-translational modification Cysteine sulfinic acid (-SO2H); alternate. The S-palmitoyl cysteine; alternate moiety is linked to residue C106. Residue H126 is part of the active site. Residue K130 forms a Glycyl lysine isopeptide (Lys-Gly) (interchain with G-Cter in SUMO) linkage. K148 bears the N6-acetyllysine mark. K182 is subject to N6-succinyllysine.

It belongs to the peptidase C56 family. Homodimer. Binds EFCAB6/DJBP and PIAS2. Part of a ternary complex containing PARK7, EFCAB6/DJBP and AR. Interacts (via N-terminus) with OTUD7B. Interacts with BBS1, HIPK1, CLCF1 and MTERF. Forms a complex with PINK1 and PRKN. Interacts (via C-terminus) with NCF1; the interaction is enhanced by LPS and modulates NCF1 phosphorylation and membrane translocation. Interacts with NENF. It depends on Deglycase activity does not require glutathione as a cofactor, however, glycated glutathione constitutes a PARK7 substrate. as a cofactor. Sumoylated on Lys-130 by PIAS2 or PIAS4; which is essential for cell-growth promoting activity and transforming activity. Post-translationally, undergoes cleavage of a C-terminal peptide and subsequent activation of protease activity in response to oxidative stress.

It localises to the cell membrane. Its subcellular location is the cytoplasm. It is found in the nucleus. The protein localises to the membrane raft. The protein resides in the mitochondrion. It localises to the endoplasmic reticulum. The enzyme catalyses N(omega)-(1-hydroxy-2-oxopropyl)-L-arginyl-[protein] + H2O = lactate + L-arginyl-[protein] + H(+). The catalysed reaction is N(6)-(1-hydroxy-2-oxopropyl)-L-lysyl-[protein] + H2O = lactate + L-lysyl-[protein] + H(+). It catalyses the reaction S-(1-hydroxy-2-oxopropyl)-L-cysteinyl-[protein] + H2O = lactate + L-cysteinyl-[protein] + H(+). It carries out the reaction N(omega)-(1-hydroxy-2-oxoethyl)-L-arginyl-[protein] + H2O = L-arginyl-[protein] + glycolate + H(+). The enzyme catalyses N(6)-(1-hydroxy-2-oxoethyl)-L-lysyl-[protein] + H2O = glycolate + L-lysyl-[protein] + H(+). The catalysed reaction is S-(1-hydroxy-2-oxoethyl)-L-cysteinyl-[protein] + H2O = glycolate + L-cysteinyl-[protein] + H(+). It catalyses the reaction N(2)-(1-hydroxy-2-oxopropyl)-dGTP + H2O = lactate + dGTP + H(+). It carries out the reaction N(2)-(1-hydroxy-2-oxopropyl)-GTP + H2O = lactate + GTP + H(+). The enzyme catalyses N(2)-(1-hydroxy-2-oxopropyl)-GDP + H2O = lactate + GDP + H(+). The catalysed reaction is N(2)-(1-hydroxy-2-oxopropyl)-GMP + H2O = lactate + GMP + H(+). It catalyses the reaction N(2)-(1-hydroxy-2-oxoethyl)-dGTP + H2O = dGTP + glycolate + H(+). It carries out the reaction N(2)-(1-hydroxy-2-oxoethyl)-GTP + H2O = glycolate + GTP + H(+). The enzyme catalyses N(2)-(1-hydroxy-2-oxoethyl)-GDP + H2O = glycolate + GDP + H(+). The catalysed reaction is N(2)-(1-hydroxy-2-oxoethyl)-GMP + H2O = glycolate + GMP + H(+). It catalyses the reaction an N(2)-(1-hydroxy-2-oxopropyl)-guanosine in RNA + H2O = a guanosine in RNA + lactate + H(+). It carries out the reaction an N(2)-(1-hydroxy-2-oxopropyl)-2'-deoxyguanosine in DNA + H2O = a 2'-deoxyguanosine in DNA + lactate + H(+). The enzyme catalyses an N(2)-(1-hydroxy-2-oxoethyl)-guanosine in RNA + H2O = a guanosine in RNA + glycolate + H(+). The catalysed reaction is an N(2)-(1-hydroxy-2-oxoethyl)-2'-deoxyguanosine in DNA + H2O = a 2'-deoxyguanosine in DNA + glycolate + H(+). Multifunctional protein with controversial molecular function which plays an important role in cell protection against oxidative stress and cell death acting as oxidative stress sensor and redox-sensitive chaperone and protease. It is involved in neuroprotective mechanisms like the stabilization of NFE2L2 and PINK1 proteins, male fertility as a positive regulator of androgen signaling pathway as well as cell growth and transformation through, for instance, the modulation of NF-kappa-B signaling pathway. Has been described as a protein and nucleotide deglycase that catalyzes the deglycation of the Maillard adducts formed between amino groups of proteins or nucleotides and reactive carbonyl groups of glyoxals. But this function is rebuted by other works. As a protein deglycase, repairs methylglyoxal- and glyoxal-glycated proteins, and releases repaired proteins and lactate or glycolate, respectively. Deglycates cysteine, arginine and lysine residues in proteins, and thus reactivates these proteins by reversing glycation by glyoxals. Acts on early glycation intermediates (hemithioacetals and aminocarbinols), preventing the formation of advanced glycation endproducts (AGE) that cause irreversible damage. Also functions as a nucleotide deglycase able to repair glycated guanine in the free nucleotide pool (GTP, GDP, GMP, dGTP) and in DNA and RNA. Is thus involved in a major nucleotide repair system named guanine glycation repair (GG repair), dedicated to reversing methylglyoxal and glyoxal damage via nucleotide sanitization and direct nucleic acid repair. Protects histones from adduction by methylglyoxal, controls the levels of methylglyoxal-derived argininine modifications on chromatin. Able to remove the glycations and restore histone 3, histone glycation disrupts both local and global chromatin architecture by altering histone-DNA interactions as well as histone acetylation and ubiquitination levels. Displays a very low glyoxalase activity that may reflect its deglycase activity. Eliminates hydrogen peroxide and protects cells against hydrogen peroxide-induced cell death. Required for correct mitochondrial morphology and function as well as for autophagy of dysfunctional mitochondria. Plays a role in regulating expression or stability of the mitochondrial uncoupling proteins SLC25A14 and SLC25A27 in dopaminergic neurons of the substantia nigra pars compacta and attenuates the oxidative stress induced by calcium entry into the neurons via L-type channels during pacemaking. Regulates astrocyte inflammatory responses, may modulate lipid rafts-dependent endocytosis in astrocytes and neuronal cells. In pancreatic islets, involved in the maintenance of mitochondrial reactive oxygen species (ROS) levels and glucose homeostasis in an age- and diet dependent manner. Protects pancreatic beta cells from cell death induced by inflammatory and cytotoxic setting. Binds to a number of mRNAs containing multiple copies of GG or CC motifs and partially inhibits their translation but dissociates following oxidative stress. Metal-binding protein able to bind copper as well as toxic mercury ions, enhances the cell protection mechanism against induced metal toxicity. In macrophages, interacts with the NADPH oxidase subunit NCF1 to direct NADPH oxidase-dependent ROS production, and protects against sepsis. The sequence is that of Parkinson disease protein 7 homolog from Chlorocebus aethiops (Green monkey).